A 513-amino-acid polypeptide reads, in one-letter code: GMP synthase [glutamine-hydrolyzing] (513 aa).

A Glutamine amidotransferase type-1 domain is found at 3 to 192 (TVVVLDYGSQ…VSKIAKMEKN (190 aa)). C80 (nucleophile) is an active-site residue. Residues H166 and E168 contribute to the active site. The 196-residue stretch at 193–388 (WEMKDFVSEK…LELPQSMINR (196 aa)) folds into the GMPS ATP-PPase domain. Position 220–226 (220–226 (SGGVDSS)) interacts with ATP.

As to quaternary structure, homodimer.

The enzyme catalyses XMP + L-glutamine + ATP + H2O = GMP + L-glutamate + AMP + diphosphate + 2 H(+). It participates in purine metabolism; GMP biosynthesis; GMP from XMP (L-Gln route): step 1/1. Functionally, catalyzes the synthesis of GMP from XMP. This chain is GMP synthase [glutamine-hydrolyzing], found in Thermosipho melanesiensis (strain DSM 12029 / CIP 104789 / BI429).